The chain runs to 303 residues: MDLRQFRYFVAVARERNFTRAARQLNIAQPPLSRQIQLLEEEVGVPLLIRNSRPVQLTDAGRLFFEQAIQVLGRVEQMQAATRRVGLHQRSVLSIGFVASTLYGVLPTLMRKLRQHAPELDIQMVELMSVQQIQAINEGRIDIGFGRVHHSDPNVSSIVLHEERLAVALPMESPMARESTPLPVHQLAGEKLIVYPKEPRPGFADQVLNILDRHDVQPGQVMEVREIQTALGLVAAEFGVCVIPASARQMRHDVHYRLIDGDRATSPVIVSHRANDSSKYISLTKQLIREMYAEHPAWLDTHN.

One can recognise an HTH lysR-type domain in the interval M1–T58. A DNA-binding region (H-T-H motif) is located at residues F18–Q37.

It belongs to the LysR transcriptional regulatory family.

In terms of biological role, probable positive regulator of the cat1 operon which encode enzymes responsible for the degradation of catechol to acetyl-CoA via the beta-ketoadipate pathway. This Acinetobacter lwoffii protein is Probable cat1 operon transcriptional activator.